We begin with the raw amino-acid sequence, 609 residues long: MSNYPPTVAAQPTTTANPLLQRHQSEQRRRELPKIVETESTSMDITIGQSKQPQFLKSIDELAAFSVAVETFKRQFDDLQKHIESIENAIDSKLESNGVVLAARNNNFHQPMLSPPRNNVSVETTVTVSQPSQEIVPETSNKPEGGRMCELMCSKGLRKYIYANISDQAKLMEEIPSALKLAKEPAKFVLDCIGKFYLQGRRAFTKESPMSSARQVSLLILESFLLMPDRGKGKVKIESWIKDEAETAAVAWRKRLMTEGGLAAAEKMDARGLLLLVACFGVPSNFRSTDLLDLIRMSGSNEIAGALKRSQFLVPMVSGIVESSIKRGMHIEALEMVYTFGMEDKFSAALVLTSFLKMSKESFERAKRKAQSPLAFKEAATKQLAVLSSVMQCMETHKLDPAKELPGWQIKEQIVSLEKDTLQLDKEMEEKARSLSLMEEAALAKRMYNQQIKRPRLSPMEMPPVTSSSYSPIYRDRSFPSQRDDDQDEISALVSSYLGPSTSFPHRSRRSPEYMVPLPHGGLGRSVYAYEHLAPNSYSPGHGHRLHRQYSPSLVHGQRHPLQYSPPIHGQQQLPYGIQRVYRHSPSEERYLGLSNQRSPRSNSSLDPK.

The segment covering 1–18 (MSNYPPTVAAQPTTTANP) has biased composition (low complexity). Residues 1–31 (MSNYPPTVAAQPTTTANPLLQRHQSEQRRRE) form a disordered region. Coiled coils occupy residues 60–97 (DELA…LESN) and 409–440 (QIKE…LMEE). Disordered regions lie at residues 454–488 (RPRL…DDQD) and 587–609 (SEER…LDPK). A compositionally biased stretch (basic and acidic residues) spans 474-484 (YRDRSFPSQRD). Residues 594–609 (LSNQRSPRSNSSLDPK) show a composition bias toward polar residues.

Belongs to the Frigida family. As to quaternary structure, homodimer. Component of the transcription activator complex FRI-C composed of FRI, FRL1, SUF4, FLX and FES1. Interacts (via N-terminus) with FRL1 and (via C-terminus) with FLX (via N-terminus), SUF4 (via C-terminus) and FES1 (via C-terminus). Interacts with ASHH2 and RIN1, a component of the SWR1 chromatin-remodeling complex. Interacts with CBP20, FIP1 and FIP2. As to expression, expressed in ovules, but not in stamens.

Its subcellular location is the nucleus speckle. In terms of biological role, required for the regulation of flowering time in the late-flowering phenotype. Involved in the enrichment of a WDR5A-containing COMPASS-like complex at the 'FLOWERING LOCUS C' that trimethylates histone H3 'Lys-4', leading to FLC up-regulation and RNA levels increase. Variants with an early-flowering phenotype (Including cv. Columbia, cv. Landsberg Erecta and cv. Wassilewskija) show loss-of-function mutations of FRI. Able to delay flowering independently of FRL1 activity. Dispensable for the reactivation of FLC in early embryogenesis, but required to maintain high levels of FLC expression in later embryonic and vegetative development. Suppresses the repression of FLC by the autonomous pathway, but has no effect on the expression of the genes involved in this pathway. The polypeptide is Protein FRIGIDA (Arabidopsis thaliana (Mouse-ear cress)).